Here is a 412-residue protein sequence, read N- to C-terminus: Double C2-like domain-containing protein beta (412 aa).

Positions 1–36 are negatively regulates targeting to plasma membrane; that stretch reads MTLRRRGEKATISIQEHMAIDVCPGPIRPIKQISDY. Residues 1 to 90 form a mediates interaction with DYNLT1 region; that stretch reads MTLRRRGEKA…EDVDQLFGAY (90 aa). Residues 38 to 123 are disordered; it reads PRFPRGLPPT…PDADGYESDD (86 aa). The span at 49–73 shows a compositional bias: low complexity; it reads APRASAPPDAPARSPAATAGPRSPS. The segment covering 95–108 has biased composition (pro residues); the sequence is GPSPGPSPVRPPAK. Residues 112-123 are compositionally biased toward acidic residues; it reads DEPDADGYESDD. 2 C2 domains span residues 126–250 and 266–399; these read ALGT…SICL and ERGR…ERWH. Ca(2+) is bound by residues aspartate 157, aspartate 163, aspartate 218, aspartate 220, aspartate 297, aspartate 303, aspartate 357, aspartate 359, and aspartate 365. The interval 257 to 375 is mediates interaction with STXBP3; that stretch reads DKAEDKSLEE…FIGGVVLGIN (119 aa). Phosphoserine is present on serine 411.

In terms of assembly, interacts with STX4; the interaction is calcium-dependent, increased by insulin and glucose, and mediates vesicle fusion with plasma membrane in pancreatic cells and adipocytes. Interacts with STXBP3; the interaction is direct, occurs at the cell membrane and regulates glucose-stimulated insulin secretion. Interacts with cytoplasmic dynein light chain DYNLT1. Interacts with the SNARE (soluble N-ethylmaleimide-sensitive factor attached protein receptor) complex composed of SNAP25, STX1A and VAMP2; the interaction is calcium-dependent and competitive with SYT1. May interact with UNC13A; the interaction mediates targeting to the plasma membrane. It depends on Ca(2+) as a cofactor. Expressed in brain; highly enriched in neurons.

It is found in the cytoplasm. The protein resides in the cytoplasmic granule. Its subcellular location is the cell membrane. In terms of biological role, calcium sensor which positively regulates SNARE-dependent fusion of vesicles with membranes. Binds phospholipids in a calcium-dependent manner and may act at the priming stage of fusion by modifying membrane curvature to stimulate fusion. Involved in calcium-triggered exocytosis in chromaffin cells and calcium-dependent spontaneous release of neurotransmitter in absence of action potentials in neuronal cells. Involved both in glucose-stimulated insulin secretion in pancreatic cells and insulin-dependent GLUT4 transport to the plasma membrane in adipocytes. This is Double C2-like domain-containing protein beta (Doc2b) from Rattus norvegicus (Rat).